The sequence spans 152 residues: uncharacterized protein (152 aa).

An N-terminal signal peptide occupies residues 1 to 23; that stretch reads MYSILIACLVLLLCLVIYVGHRA.

The protein belongs to the asfivirus EP152R family.

Its subcellular location is the virion. This is an uncharacterized protein from Ornithodoros (relapsing fever ticks).